A 377-amino-acid polypeptide reads, in one-letter code: 3-dehydroquinate synthase (377 aa).

NAD(+) contacts are provided by residues 115 to 119 (GVIGD), 139 to 140 (TS), lysine 152, and lysine 161. The Zn(2+) site is built by glutamate 194, histidine 256, and histidine 275.

It belongs to the sugar phosphate cyclases superfamily. Dehydroquinate synthase family. It depends on NAD(+) as a cofactor. Requires Co(2+) as cofactor. Zn(2+) serves as cofactor.

The protein localises to the cytoplasm. The catalysed reaction is 7-phospho-2-dehydro-3-deoxy-D-arabino-heptonate = 3-dehydroquinate + phosphate. The protein operates within metabolic intermediate biosynthesis; chorismate biosynthesis; chorismate from D-erythrose 4-phosphate and phosphoenolpyruvate: step 2/7. Catalyzes the conversion of 3-deoxy-D-arabino-heptulosonate 7-phosphate (DAHP) to dehydroquinate (DHQ). The polypeptide is 3-dehydroquinate synthase (Rhizobium meliloti (strain 1021) (Ensifer meliloti)).